The following is a 217-amino-acid chain: 3-oxoadipate CoA-transferase subunit B (217 aa).

E50 is an active-site residue.

The protein belongs to the 3-oxoacid CoA-transferase subunit B family. In terms of assembly, heterodimer.

It carries out the reaction 3-oxoadipate + succinyl-CoA = 3-oxoadipyl-CoA + succinate. The protein operates within aromatic compound metabolism; beta-ketoadipate pathway; acetyl-CoA and succinyl-CoA from 3-oxoadipate: step 1/2. The protein is 3-oxoadipate CoA-transferase subunit B (pcaJ) of Acinetobacter baylyi (strain ATCC 33305 / BD413 / ADP1).